We begin with the raw amino-acid sequence, 143 residues long: MAIERTFSIIKPNAVAKNVIGSIFARFESAGFKIIGTKMLHLTVEQARGFYAEHEGKPFFDGLVEFMTSGPIVVSVLESENAVQRHRDLLGATNPANALAGTLRADYADSFTENGTHGSDSVESANREIAYFFGEGEICPRTR.

The ATP site is built by lysine 11, phenylalanine 59, arginine 87, threonine 93, arginine 104, and asparagine 114. Histidine 117 (pros-phosphohistidine intermediate) is an active-site residue.

It belongs to the NDK family. In terms of assembly, homotetramer. Mg(2+) serves as cofactor.

It is found in the cytoplasm. It catalyses the reaction a 2'-deoxyribonucleoside 5'-diphosphate + ATP = a 2'-deoxyribonucleoside 5'-triphosphate + ADP. The enzyme catalyses a ribonucleoside 5'-diphosphate + ATP = a ribonucleoside 5'-triphosphate + ADP. Its function is as follows. Major role in the synthesis of nucleoside triphosphates other than ATP. The ATP gamma phosphate is transferred to the NDP beta phosphate via a ping-pong mechanism, using a phosphorylated active-site intermediate. In Cronobacter sakazakii (strain ATCC BAA-894) (Enterobacter sakazakii), this protein is Nucleoside diphosphate kinase.